Consider the following 116-residue polypeptide: Non-specific lipid-transfer protein (116 aa).

Positions 1–23 (MASMKVVCVALIMCIVIAPMAES) are cleaved as a signal peptide. 4 disulfide bridges follow: cysteine 27/cysteine 74, cysteine 37/cysteine 51, cysteine 52/cysteine 97, and cysteine 72/cysteine 111.

The protein belongs to the plant LTP family.

In terms of biological role, plant non-specific lipid-transfer proteins transfer phospholipids as well as galactolipids across membranes. May play a role in wax or cutin deposition in the cell walls of expanding epidermal cells and certain secretory tissues. The sequence is that of Non-specific lipid-transfer protein from Cicer arietinum (Chickpea).